Reading from the N-terminus, the 577-residue chain is Signal peptide peptidase-like 2B (577 aa).

The N-terminal stretch at 1 to 19 (MAAARLAASLLLLAAQVAC) is a signal peptide. The Lumenal segment spans residues 20-168 (EFGVLRVVPQ…APSEPVMDYN (149 aa)). A PA domain is found at 49-149 (LPHDLNKVSL…RDLQDIFRRF (101 aa)). N91 carries an N-linked (GlcNAc...) asparagine glycan. A helical membrane pass occupies residues 169-189 (MVIIFIMAVGTVALGGYWAGS). Over 190-216 (HDVKKYMKHKRDDVPEKQEDEAVDVTP) the chain is Cytoplasmic. A helical membrane pass occupies residues 217–237 (VMICVFVVMCCFMLVLLYYFY). Topologically, residues 238–239 (DR) are lumenal. Residues 240-260 (LVYVIIGIFCLASSTGLYSCL) traverse the membrane as a helical segment. Residues 261–286 (APCVRKLPFCTCRVPDNNLPYFHKRP) lie on the Cytoplasmic side of the membrane. The chain crosses the membrane as a helical span at residues 287–307 (QARMLLLALFCVTVSVVWGVF). The Lumenal segment spans residues 308 to 312 (RNEDQ). A helical transmembrane segment spans residues 313 to 333 (WAWVLQDTLGIAFCLYMLRTI). Residues 334–341 (RLPTFKAC) are Cytoplasmic-facing. Residues 342–362 (TLLLLVLFVYDIFFVFITPYL) form a helical membrane-spanning segment. The active site involves D352. Residues 363–405 (TKSGNSIMVEVATGPSNSSTHEKLPMVLKVPRLNTSPLSLCDR) are Lumenal-facing. The helical transmembrane segment at 406–426 (PFSLLGFGDILVPGLLVAYCH) threads the bilayer. D414 is an active-site residue. Topologically, residues 427–438 (RFDIQVQSSRIY) are cytoplasmic. A helical transmembrane segment spans residues 439 to 459 (FVACTIAYGLGLLVTFVALVL). Residues 460–463 (MRHG) are Lumenal-facing. Residues 464–484 (QPALLYLVPCTLLTSCTVALW) form a helical membrane-spanning segment. Residues 465-467 (PAL) carry the PAL motif. Over 485 to 577 (RREMGAFWTG…IPVVTPGTSA (93 aa)) the chain is Cytoplasmic. A disordered region spans residues 502–577 (QTPWAAPQGP…IPVVTPGTSA (76 aa)).

The protein belongs to the peptidase A22B family. Monomer. Homodimer. Interacts with ITM2B and TNF. In terms of processing, glycosylated.

It is found in the cell membrane. The protein resides in the golgi apparatus membrane. Its subcellular location is the lysosome membrane. It localises to the endosome membrane. The protein localises to the membrane. Intramembrane-cleaving aspartic protease (I-CLiP) that cleaves type II membrane signal peptides in the hydrophobic plane of the membrane. Functions in ITM2B and TNF processing. Catalyzes the intramembrane cleavage of the anchored fragment of shed TNF-alpha (TNF), which promotes the release of the intracellular domain (ICD) for signaling to the nucleus. May play a role in the regulation of innate and adaptive immunity. The chain is Signal peptide peptidase-like 2B from Rattus norvegicus (Rat).